The primary structure comprises 150 residues: D-aminoacyl-tRNA deacylase (150 aa).

Residues 136 to 137 carry the Gly-cisPro motif, important for rejection of L-amino acids motif; the sequence is GP.

Belongs to the DTD family. In terms of assembly, homodimer.

The protein localises to the cytoplasm. The catalysed reaction is glycyl-tRNA(Ala) + H2O = tRNA(Ala) + glycine + H(+). It carries out the reaction a D-aminoacyl-tRNA + H2O = a tRNA + a D-alpha-amino acid + H(+). Its function is as follows. An aminoacyl-tRNA editing enzyme that deacylates mischarged D-aminoacyl-tRNAs. Also deacylates mischarged glycyl-tRNA(Ala), protecting cells against glycine mischarging by AlaRS. Acts via tRNA-based rather than protein-based catalysis; rejects L-amino acids rather than detecting D-amino acids in the active site. By recycling D-aminoacyl-tRNA to D-amino acids and free tRNA molecules, this enzyme counteracts the toxicity associated with the formation of D-aminoacyl-tRNA entities in vivo and helps enforce protein L-homochirality. The sequence is that of D-aminoacyl-tRNA deacylase from Staphylococcus aureus (strain MRSA252).